The primary structure comprises 863 residues: Glycogen phosphorylase (863 aa).

Lys618 carries the post-translational modification N6-(pyridoxal phosphate)lysine.

It belongs to the glycogen phosphorylase family. The cofactor is pyridoxal 5'-phosphate.

The catalysed reaction is [(1-&gt;4)-alpha-D-glucosyl](n) + phosphate = [(1-&gt;4)-alpha-D-glucosyl](n-1) + alpha-D-glucose 1-phosphate. In terms of biological role, phosphorylase is an important allosteric enzyme in carbohydrate metabolism. Enzymes from different sources differ in their regulatory mechanisms and in their natural substrates. However, all known phosphorylases share catalytic and structural properties. This is Glycogen phosphorylase (glgP) from Mycobacterium tuberculosis (strain ATCC 25618 / H37Rv).